The primary structure comprises 1280 residues: Ankyrin repeat and sterile alpha motif domain-containing protein 1B (1280 aa).

ANK repeat units follow at residues 2–31, 57–86, 90–119, 126–155, 159–188, 192–221, and 224–253; these read GKEQ…GLLG, SGYT…STNV, KGCF…SHSR, EKET…DPSM, RGET…NLMS, RKHT…DVNT, and EKGS…DANI. Disordered stretches follow at residues 299 to 322, 361 to 399, 479 to 573, 704 to 723, and 755 to 791; these read RHRP…LRHK, MESF…EEKS, SVSD…STGS, NGEA…SNTG, and SNLV…PSFT. The segment covering 482 to 491 has biased composition (basic and acidic residues); it reads DAERGNHGDD. Composition is skewed to polar residues over residues 520–550, 707–723, and 770–782; these read KQRT…SSLG, ARSN…SNTG, and SRGQ…SSPS. SAM domains lie at 824–890 and 898–963; these read CPVQ…LPRV and NNPT…RLHE. 2 disordered regions span residues 960–994 and 1208–1243; these read RLHE…LSQA and GSST…MDQK. Residues 980 to 994 are compositionally biased toward polar residues; sequence GNHTPPQLSPSLSQA. Positions 1071 to 1223 constitute a PID domain; sequence IFQSCDYEAY…ESFDSKPSKP (153 aa).

The protein resides in the cytoplasm. The protein is Ankyrin repeat and sterile alpha motif domain-containing protein 1B (anks1b) of Danio rerio (Zebrafish).